Reading from the N-terminus, the 310-residue chain is tRNA-cytidine(32) 2-sulfurtransferase (310 aa).

The short motif at 48–53 is the PP-loop motif element; the sequence is SGGKDS. Residues Cys123, Cys126, and Cys214 each coordinate [4Fe-4S] cluster.

Belongs to the TtcA family. In terms of assembly, homodimer. The cofactor is Mg(2+). Requires [4Fe-4S] cluster as cofactor.

It localises to the cytoplasm. The catalysed reaction is cytidine(32) in tRNA + S-sulfanyl-L-cysteinyl-[cysteine desulfurase] + AH2 + ATP = 2-thiocytidine(32) in tRNA + L-cysteinyl-[cysteine desulfurase] + A + AMP + diphosphate + H(+). Its pathway is tRNA modification. In terms of biological role, catalyzes the ATP-dependent 2-thiolation of cytidine in position 32 of tRNA, to form 2-thiocytidine (s(2)C32). The sulfur atoms are provided by the cysteine/cysteine desulfurase (IscS) system. The polypeptide is tRNA-cytidine(32) 2-sulfurtransferase (Vibrio vulnificus (strain CMCP6)).